We begin with the raw amino-acid sequence, 175 residues long: ATP-dependent protease subunit HslV (175 aa).

Residue T2 is part of the active site. Residues G158, C161, and T164 each contribute to the Na(+) site.

It belongs to the peptidase T1B family. HslV subfamily. A double ring-shaped homohexamer of HslV is capped on each side by a ring-shaped HslU homohexamer. The assembly of the HslU/HslV complex is dependent on binding of ATP.

It localises to the cytoplasm. It carries out the reaction ATP-dependent cleavage of peptide bonds with broad specificity.. Its activity is regulated as follows. Allosterically activated by HslU binding. Protease subunit of a proteasome-like degradation complex believed to be a general protein degrading machinery. In Haemophilus influenzae (strain PittGG), this protein is ATP-dependent protease subunit HslV.